Consider the following 77-residue polypeptide: Cysteine-rich protein 1 (77 aa).

In terms of domain architecture, LIM zinc-binding spans 2–63; it reads PKCPKCSKEV…HPCYAAMFGP (62 aa). N6-acetyllysine occurs at positions 9 and 22. Position 68 is an omega-N-methylarginine (R68).

Functionally, seems to have a role in zinc absorption and may function as an intracellular zinc transport protein. The protein is Cysteine-rich protein 1 (CRIP1) of Bos taurus (Bovine).